Consider the following 58-residue polypeptide: Photosystem II reaction center protein K (58 aa).

Positions 1–21 are excised as a propeptide; the sequence is MLNMISTFFDSSSNFSEAFLA. A helical transmembrane segment spans residues 29–49; sequence IFDPIVDVMPIIPVFFLLLAF.

This sequence belongs to the PsbK family. PSII is composed of 1 copy each of membrane proteins PsbA, PsbB, PsbC, PsbD, PsbE, PsbF, PsbH, PsbI, PsbJ, PsbK, PsbL, PsbM, PsbT, PsbX, PsbY, PsbZ, Psb30/Ycf12, at least 3 peripheral proteins of the oxygen-evolving complex and a large number of cofactors. It forms dimeric complexes.

The protein localises to the plastid. It is found in the chloroplast thylakoid membrane. In terms of biological role, one of the components of the core complex of photosystem II (PSII). PSII is a light-driven water:plastoquinone oxidoreductase that uses light energy to abstract electrons from H(2)O, generating O(2) and a proton gradient subsequently used for ATP formation. It consists of a core antenna complex that captures photons, and an electron transfer chain that converts photonic excitation into a charge separation. This Chaetosphaeridium globosum (Charophycean green alga) protein is Photosystem II reaction center protein K.